A 388-amino-acid chain; its full sequence is MTTISDLPYDLVKEIFSWVPFTSLRAVRSTCKTWNALSKNQIFGKKSVARNQFLELMILDSRVCSLRFDLQKIRNEDEEDLVDPSMKQISIPNNDDQVEISRVYHCDGLLLCIPKDNSSLMLWNPYLGQTKRIRPKNTFHRDDSFALGYNNRNHKILRLNEENESHIDVYDFSSDSWRTVPDDNPYRDELIYQSGVSLKGNAYFFDREVTTEAEVGTEDLLITGIEDYLRCFDFTTERFGPRLPLPFILPSPSFEYLALSWARDDKLAVLYSHYDTFDIIEIWISTKIEPNAVSWSTFLKVDMSLINGLTDDFLIRFEPKSFFIDEEKKVAVLFDTKVTETCRYQMAYIVGDDGYFKSVNIGVISNSHWIGGELVRSSYVPSLLQLQV.

The F-box domain maps to 1-47; it reads MTTISDLPYDLVKEIFSWVPFTSLRAVRSTCKTWNALSKNQIFGKKS.

The sequence is that of Putative F-box protein At3g49520 from Arabidopsis thaliana (Mouse-ear cress).